Here is a 674-residue protein sequence, read N- to C-terminus: tRNA 5-methylaminomethyl-2-thiouridine biosynthesis bifunctional protein MnmC (674 aa).

A tRNA (mnm(5)s(2)U34)-methyltransferase region spans residues 1 to 237 (MLTSYQLESP…KREMTVGELN (237 aa)). The tract at residues 270–674 (VGAGLAGANT…IRDLKRSQIL (405 aa)) is FAD-dependent cmnm(5)s(2)U34 oxidoreductase.

It in the N-terminal section; belongs to the methyltransferase superfamily. tRNA (mnm(5)s(2)U34)-methyltransferase family. The protein in the C-terminal section; belongs to the DAO family. Requires FAD as cofactor.

Its subcellular location is the cytoplasm. It carries out the reaction 5-aminomethyl-2-thiouridine(34) in tRNA + S-adenosyl-L-methionine = 5-methylaminomethyl-2-thiouridine(34) in tRNA + S-adenosyl-L-homocysteine + H(+). In terms of biological role, catalyzes the last two steps in the biosynthesis of 5-methylaminomethyl-2-thiouridine (mnm(5)s(2)U) at the wobble position (U34) in tRNA. Catalyzes the FAD-dependent demodification of cmnm(5)s(2)U34 to nm(5)s(2)U34, followed by the transfer of a methyl group from S-adenosyl-L-methionine to nm(5)s(2)U34, to form mnm(5)s(2)U34. This Marinomonas sp. (strain MWYL1) protein is tRNA 5-methylaminomethyl-2-thiouridine biosynthesis bifunctional protein MnmC.